A 446-amino-acid polypeptide reads, in one-letter code: Probable D-serine dehydratase (446 aa).

Lys-113 is modified (N6-(pyridoxal phosphate)lysine).

It belongs to the serine/threonine dehydratase family. DsdA subfamily. Pyridoxal 5'-phosphate serves as cofactor.

The catalysed reaction is D-serine = pyruvate + NH4(+). The polypeptide is Probable D-serine dehydratase (Burkholderia lata (strain ATCC 17760 / DSM 23089 / LMG 22485 / NCIMB 9086 / R18194 / 383)).